Consider the following 188-residue polypeptide: MIQPVKEKIILGIDPGTTIMGYGVLRVCGTRPEMIAMGIIDLRKFGNHYLKLRHIHERVLSIIESYLPDELAIEAPFFGKNVQSMLKLGRAQGVAMAAALSRDIPITEYAPLKIKMAITGNGQASKEQVADMLQRMLHFAKEDMPVFMDATDGLAAAYCHFLQMGRPVMEKGYSGWKDFIAKNPERVK.

Residues Asp-14, Glu-74, and Asp-149 contribute to the active site. 3 residues coordinate Mg(2+): Asp-14, Glu-74, and Asp-149.

Belongs to the RuvC family. In terms of assembly, homodimer which binds Holliday junction (HJ) DNA. The HJ becomes 2-fold symmetrical on binding to RuvC with unstacked arms; it has a different conformation from HJ DNA in complex with RuvA. In the full resolvosome a probable DNA-RuvA(4)-RuvB(12)-RuvC(2) complex forms which resolves the HJ. Requires Mg(2+) as cofactor.

It is found in the cytoplasm. It catalyses the reaction Endonucleolytic cleavage at a junction such as a reciprocal single-stranded crossover between two homologous DNA duplexes (Holliday junction).. Functionally, the RuvA-RuvB-RuvC complex processes Holliday junction (HJ) DNA during genetic recombination and DNA repair. Endonuclease that resolves HJ intermediates. Cleaves cruciform DNA by making single-stranded nicks across the HJ at symmetrical positions within the homologous arms, yielding a 5'-phosphate and a 3'-hydroxyl group; requires a central core of homology in the junction. The consensus cleavage sequence is 5'-(A/T)TT(C/G)-3'. Cleavage occurs on the 3'-side of the TT dinucleotide at the point of strand exchange. HJ branch migration catalyzed by RuvA-RuvB allows RuvC to scan DNA until it finds its consensus sequence, where it cleaves and resolves the cruciform DNA. The sequence is that of Crossover junction endodeoxyribonuclease RuvC from Bacteroides fragilis (strain ATCC 25285 / DSM 2151 / CCUG 4856 / JCM 11019 / LMG 10263 / NCTC 9343 / Onslow / VPI 2553 / EN-2).